The chain runs to 235 residues: Hydroxyacylglutathione hydrolase (235 aa).

His-53, His-55, Asp-57, His-58, His-109, Asp-127, and His-165 together coordinate Zn(2+).

It belongs to the metallo-beta-lactamase superfamily. Glyoxalase II family. As to quaternary structure, monomer. It depends on Zn(2+) as a cofactor.

The enzyme catalyses an S-(2-hydroxyacyl)glutathione + H2O = a 2-hydroxy carboxylate + glutathione + H(+). Its pathway is secondary metabolite metabolism; methylglyoxal degradation; (R)-lactate from methylglyoxal: step 2/2. In terms of biological role, thiolesterase that catalyzes the hydrolysis of S-D-lactoyl-glutathione to form glutathione and D-lactic acid. This Actinobacillus pleuropneumoniae serotype 5b (strain L20) protein is Hydroxyacylglutathione hydrolase.